The following is a 188-amino-acid chain: Elongation factor P (188 aa).

It belongs to the elongation factor P family.

The protein localises to the cytoplasm. It functions in the pathway protein biosynthesis; polypeptide chain elongation. Involved in peptide bond synthesis. Stimulates efficient translation and peptide-bond synthesis on native or reconstituted 70S ribosomes in vitro. Probably functions indirectly by altering the affinity of the ribosome for aminoacyl-tRNA, thus increasing their reactivity as acceptors for peptidyl transferase. This is Elongation factor P from Wolbachia pipientis subsp. Culex pipiens (strain wPip).